Consider the following 397-residue polypeptide: MKLEDDKIHSPTNTEEEGYGSDVEVENGTDISGSKGGSGVELKRPDLKGSFRCSICSKVFCHSSSLSRHRMQAHFKSYKCTVCRKDISSSESLRTHMFKQHHISRMYMCRCCNWAFPDKSLLHIHLQTATNNNDSNNNNNSVIPHGVINRSCHLITDPFQLIRTPLLNLPTPQSLESSVPSLPIASIPIPALQSPIRSQPQTPSWLANLPKPIPTTAPIFVADSKEKIKDEVEKPDVYTSQSPTCSSVSFKSDLSAFHQLCSDRALISSPLIDTASPSSSSSSSRISPRHECFDCHVSRTKILISENKCKLLEHKIGTMQQESLEANAQMNGLEQTVLRLRMEAHALREHNELFQRKLLECQNLAVKFLQNDKAHDASEMNSFLRILINNTILTRPF.

Residues 1-40 (MKLEDDKIHSPTNTEEEGYGSDVEVENGTDISGSKGGSGV) are disordered. Acidic residues predominate over residues 14-27 (TEEEGYGSDVEVEN). 3 C2H2-type zinc fingers span residues 51–74 (FRCSICSKVFCHSSSLSRHRMQAH), 78–102 (YKCTVCRKDISSSESLRTHMFKQHH), and 107–125 (YMCRCCNWAFPDKSLLHIH).

The protein localises to the nucleus. The chain is Zinc finger transcription factor family protein 30 (ztf-30) from Caenorhabditis elegans.